The primary structure comprises 657 residues: Polycomb protein suz12-A (657 aa).

The segment at 335–363 is disordered; that stretch reads TAPVAKPLATRNSESSTVDSSKTSNIKPP. Low complexity predominate over residues 347 to 358; that stretch reads SESSTVDSSKTS. The C2H2-type zinc-finger motif lies at 413 to 436; it reads LHCPWCTLNCRKLYSLLKHLKLSH. Residues 528 to 604 form a VEFS-box region; that stretch reads RLYFHSDSCT…NQMNQACMSF (77 aa).

Belongs to the VEFS (VRN2-EMF2-FIS2-SU(Z)12) family. In terms of assembly, component of the prc2/eed-ezh2 complex.

It localises to the nucleus. Polycomb group (PcG) protein. Component of the prc2/eed-ezh2 complex, which methylates 'Lys-9' and 'Lys-27' of histone H3, leading to transcriptional repression of the affected target gene. The polypeptide is Polycomb protein suz12-A (suz12a) (Danio rerio (Zebrafish)).